Reading from the N-terminus, the 850-residue chain is Protein STB2 (850 aa).

Phosphoserine occurs at positions 594 and 625.

To yeast STB6. Interacts with SIN3.

This Saccharomyces cerevisiae (strain ATCC 204508 / S288c) (Baker's yeast) protein is Protein STB2 (STB2).